Here is a 74-residue protein sequence, read N- to C-terminus: Progonadoliberin-3 (74 aa).

The first 15 residues, 1–15 (VQVVVLALVAQVTLS), serve as a signal peptide directing secretion. A Pyrrolidone carboxylic acid modification is found at glutamine 16. Glycine 25 carries the glycine amide modification.

The protein belongs to the GnRH family.

The protein localises to the secreted. Its function is as follows. Stimulates the secretion of gonadotropins. The protein is Progonadoliberin-3 (gnrh3) of Oncorhynchus mykiss (Rainbow trout).